A 588-amino-acid chain; its full sequence is Aspartate--tRNA ligase (588 aa).

Glutamate 174 contributes to the L-aspartate binding site. Positions 198-201 (QLFK) are aspartate. Residue arginine 220 participates in L-aspartate binding. ATP-binding positions include 220-222 (RDE) and glutamine 229. Histidine 448 is an L-aspartate binding site. Glutamate 482 provides a ligand contact to ATP. Arginine 489 provides a ligand contact to L-aspartate. Position 534-537 (534-537 (GLDR)) interacts with ATP.

This sequence belongs to the class-II aminoacyl-tRNA synthetase family. Type 1 subfamily. Homodimer.

It localises to the cytoplasm. It carries out the reaction tRNA(Asp) + L-aspartate + ATP = L-aspartyl-tRNA(Asp) + AMP + diphosphate. Catalyzes the attachment of L-aspartate to tRNA(Asp) in a two-step reaction: L-aspartate is first activated by ATP to form Asp-AMP and then transferred to the acceptor end of tRNA(Asp). This is Aspartate--tRNA ligase from Exiguobacterium sibiricum (strain DSM 17290 / CCUG 55495 / CIP 109462 / JCM 13490 / 255-15).